The following is a 691-amino-acid chain: Protein phosphatase 1 regulatory subunit 37 (691 aa).

Residues 1 to 43 form a disordered region; that stretch reads MEIAPQEAPPVPGADGDIEEAPAEAGSPSPASPPADGRLKAAA. 2 positions are modified to phosphoserine: serine 50 and serine 56. LRR repeat units lie at residues 220 to 240, 248 to 269, 277 to 297, 306 to 326, and 334 to 354; these read SLAV…MLLA, NLRE…AQLG, SLQI…AYIC, GLVT…AFLG, and SLET…RHLK. The interval 460–662 is disordered; the sequence is EREEKEQPPQ…PEVKGGSCGL (203 aa). The span at 468–481 shows a compositional bias: polar residues; it reads PQLSASMPETTATE. Over residues 505-523 the composition is skewed to acidic residues; it reads SDSDSDSDGEEEEEEEGER. Serine 561 carries the phosphoserine modification. Pro residues-rich tracts occupy residues 584–605 and 620–634; these read PASP…PSLP and PQPP…PPLP.

The protein belongs to the PPP1R37 family. Interacts with PPP1CA.

In terms of biological role, inhibits phosphatase activity of protein phosphatase 1 (PP1) complexes. This Homo sapiens (Human) protein is Protein phosphatase 1 regulatory subunit 37 (PPP1R37).